The following is a 402-amino-acid chain: Pentalenic acid synthase (402 aa).

The interval 1 to 28 is disordered; the sequence is MTEPGTSVSAPVAFPQDRTCPYDPPTAY. C351 serves as a coordination point for heme.

The protein belongs to the cytochrome P450 family. The cofactor is heme.

It catalyses the reaction 1-deoxypentalenate + reduced 2[4Fe-4S]-[ferredoxin] + O2 + 2 H(+) = pentalenate + oxidized 2[4Fe-4S]-[ferredoxin] + H2O. Its pathway is antibiotic biosynthesis; neopentalenolactone biosynthesis. Functionally, catalyzes the conversion of 1-deoxypentalenic acid to pentalenic acid in the biosynthesis of neopentalenolactone antibiotic. This chain is Pentalenic acid synthase (cyp28), found in Streptomyces avermitilis (strain ATCC 31267 / DSM 46492 / JCM 5070 / NBRC 14893 / NCIMB 12804 / NRRL 8165 / MA-4680).